The chain runs to 106 residues: SH3 domain-binding glutamic acid-rich-like protein 2-A (106 aa).

Residues 61–67 carry the SH3-binding motif; the sequence is QGNPLPP.

The protein belongs to the SH3BGR family.

The protein resides in the nucleus. The chain is SH3 domain-binding glutamic acid-rich-like protein 2-A (sh3bgrl2-a) from Xenopus laevis (African clawed frog).